Consider the following 40-residue polypeptide: Natriuretic peptide PpNP-a (40 aa).

Positions 1-8 are excised as a propeptide; it reads SGSKTANI. Positions 1 to 40 are disordered; sequence SGSKTANIGDGCFGVPIDHIGSTSGMGCGSPRPKPTPGGS. The cysteines at positions 12 and 28 are disulfide-linked.

This sequence belongs to the natriuretic peptide family. As to expression, expressed by the venom gland.

It localises to the secreted. Functionally, snake venom natriuretic peptide that targets both NPR1 and NPR2. Exhibits hypotensive and vasodepressor activities. This Pseudechis porphyriacus (Red-bellied black snake) protein is Natriuretic peptide PpNP-a.